We begin with the raw amino-acid sequence, 353 residues long: MSEPLKPRIDFAEPLKEEPTSAFKAQQTFSEAESRTFAPAAIDERPEDEGVAEAAVDAALRPKRSLWRKMVMGGLALFGASVVGQGVQWTMNAWQTQDWVALGGCAAGALIIGAGVGSVVTEWRRLWRLRQRAHERDEARELLHSHSVGKGRAFCEKLAQQAGIDQSHPALQRWYAAIHETQNDREIVGLYAHLVQPVLDAQARREISRFAAESTLMIAVSPLALVDMAFIAWRNLRLINRITTLYGIELGYYSRLRLFRLVLLNIAFAGASELVREVGMDWMSQDLAARLSTRAAQGIGAGLLTARLGIKAMELCRPLPWIDNDKPRLGDFRRQLIGQLKETLQKSKSSPEK.

Residues 1–19 (MSEPLKPRIDFAEPLKEEP) show a composition bias toward basic and acidic residues. The disordered stretch occupies residues 1-35 (MSEPLKPRIDFAEPLKEEPTSAFKAQQTFSEAESR). The next 3 membrane-spanning stretches (helical) occupy residues 70–90 (MVMG…VQWT), 100–120 (VALG…GSVV), and 213–233 (ESTL…FIAW).

Belongs to the UPF0283 family.

The protein resides in the cell inner membrane. This chain is UPF0283 membrane protein YcjF, found in Salmonella dublin (strain CT_02021853).